A 169-amino-acid chain; its full sequence is Prolyl-tRNA synthetase associated domain-containing protein 1 (169 aa).

It belongs to the PRORSD1 family.

The chain is Prolyl-tRNA synthetase associated domain-containing protein 1 (Prorsd1) from Mus musculus (Mouse).